Reading from the N-terminus, the 198-residue chain is Large ribosomal subunit protein bL25 (198 aa).

Belongs to the bacterial ribosomal protein bL25 family. CTC subfamily. In terms of assembly, part of the 50S ribosomal subunit; part of the 5S rRNA/L5/L18/L25 subcomplex. Contacts the 5S rRNA. Binds to the 5S rRNA independently of L5 and L18.

In terms of biological role, this is one of the proteins that binds to the 5S RNA in the ribosome where it forms part of the central protuberance. This is Large ribosomal subunit protein bL25 from Azotobacter vinelandii (strain DJ / ATCC BAA-1303).